We begin with the raw amino-acid sequence, 69 residues long: Putative membrane protein insertion efficiency factor (69 aa).

Belongs to the UPF0161 family.

The protein resides in the cell membrane. Could be involved in insertion of integral membrane proteins into the membrane. This Alkaliphilus oremlandii (strain OhILAs) (Clostridium oremlandii (strain OhILAs)) protein is Putative membrane protein insertion efficiency factor.